We begin with the raw amino-acid sequence, 264 residues long: MHQYLDLLRRIQAEGVTKTDRTGTGTTSVFGHQMRFDLSRGFPLVTTKKLHTRSIFVELLWFLRGDTNIGWLKDNKVSIWDEWADANGDLGPVYGKQWRSWACPDGSTVDQITQVVEMIRKSPDSRRLIVSAWNPADIESMALPPCHCLFQFYVADGKLSCQLYQRSADVFLGVPFNIASYALLTHMVAQVTGLEVGAFVHTFGDAHLYSNHMEQAALQLSRAPLPLPRLELNPEVKDLFAFTMDDIKVVDYQCHAHIAAPVAV.

Arg21 is a binding site for dUMP. His51 lines the (6R)-5,10-methylene-5,6,7,8-tetrahydrofolate pocket. Residue 126–127 (RR) coordinates dUMP. Cys146 serves as the catalytic Nucleophile. DUMP is bound by residues 166 to 169 (RSAD), Asn177, and 207 to 209 (HLY). (6R)-5,10-methylene-5,6,7,8-tetrahydrofolate is bound at residue Asp169. Ala263 is a (6R)-5,10-methylene-5,6,7,8-tetrahydrofolate binding site.

Belongs to the thymidylate synthase family. Bacterial-type ThyA subfamily. In terms of assembly, homodimer.

The protein resides in the cytoplasm. It carries out the reaction dUMP + (6R)-5,10-methylene-5,6,7,8-tetrahydrofolate = 7,8-dihydrofolate + dTMP. The protein operates within pyrimidine metabolism; dTTP biosynthesis. Its function is as follows. Catalyzes the reductive methylation of 2'-deoxyuridine-5'-monophosphate (dUMP) to 2'-deoxythymidine-5'-monophosphate (dTMP) while utilizing 5,10-methylenetetrahydrofolate (mTHF) as the methyl donor and reductant in the reaction, yielding dihydrofolate (DHF) as a by-product. This enzymatic reaction provides an intracellular de novo source of dTMP, an essential precursor for DNA biosynthesis. The chain is Thymidylate synthase from Paramagnetospirillum magneticum (strain ATCC 700264 / AMB-1) (Magnetospirillum magneticum).